Here is a 606-residue protein sequence, read N- to C-terminus: Pentatricopeptide repeat-containing protein At1g31920 (606 aa).

9 PPR repeats span residues 96–130, 131–165, 166–200, 201–227, 233–263, 268–298, 299–333, 334–368, and 370–404; these read CTFD…GNEP, DNFT…GLEA, DVFV…TAAS, WSSM…MCSE, EESG…LLRN, NIIV…MEKR, NNLT…GLEP, DHVV…GKVE, and TAEH…KNDV. The interval 405 to 480 is type E motif; it reads IWRTFLSQCR…TPGFSIVELK (76 aa). The segment at 481–511 is type E(+) motif; the sequence is GKTHRFVSQDRSHPKCKEIYKMLHQMEWQLK. The segment at 512–606 is type DYW motif; it reads FEGYSPDLTQ…GGTCSCKDYW (95 aa).

Belongs to the PPR family. PCMP-H subfamily.

This Arabidopsis thaliana (Mouse-ear cress) protein is Pentatricopeptide repeat-containing protein At1g31920 (PCMP-H11).